The chain runs to 224 residues: Peptidyl-tRNA hydrolase (224 aa).

Tyrosine 27 provides a ligand contact to tRNA. Histidine 32 (proton acceptor) is an active-site residue. 3 residues coordinate tRNA: tyrosine 78, asparagine 80, and asparagine 126. Residues 203–215 (LSGPSSDLDGSNP) are compositionally biased toward low complexity. The disordered stretch occupies residues 203 to 224 (LSGPSSDLDGSNPAPGHGEASS).

Belongs to the PTH family. As to quaternary structure, monomer.

The protein resides in the cytoplasm. The catalysed reaction is an N-acyl-L-alpha-aminoacyl-tRNA + H2O = an N-acyl-L-amino acid + a tRNA + H(+). Hydrolyzes ribosome-free peptidyl-tRNAs (with 1 or more amino acids incorporated), which drop off the ribosome during protein synthesis, or as a result of ribosome stalling. Functionally, catalyzes the release of premature peptidyl moieties from peptidyl-tRNA molecules trapped in stalled 50S ribosomal subunits, and thus maintains levels of free tRNAs and 50S ribosomes. The protein is Peptidyl-tRNA hydrolase of Synechococcus sp. (strain JA-2-3B'a(2-13)) (Cyanobacteria bacterium Yellowstone B-Prime).